We begin with the raw amino-acid sequence, 223 residues long: DNA mismatch repair protein MutH (223 aa).

It belongs to the MutH family.

It is found in the cytoplasm. In terms of biological role, sequence-specific endonuclease that cleaves unmethylated GATC sequences. It is involved in DNA mismatch repair. The protein is DNA mismatch repair protein MutH of Shewanella baltica (strain OS195).